We begin with the raw amino-acid sequence, 810 residues long: Interleukin-4 receptor subunit alpha (810 aa).

Residues Met1–Ser25 form the signal peptide. The Extracellular segment spans residues Ile26–Arg233. A disulfide bond links Cys34 and Cys44. The N-linked (GlcNAc...) asparagine glycan is linked to Asn72. Cys75 and Cys87 are disulfide-bonded. Residues Ala126–Asn224 form the Fibronectin type-III domain. N-linked (GlcNAc...) asparagine glycans are attached at residues Asn129, Asn135, and Asn163. Ser165 is subject to Phosphoserine. The WSXWS motif motif lies at Trp213–Ser217. The chain crosses the membrane as a helical span at residues Leu234–Thr257. Residues Lys258–Ser810 are Cytoplasmic-facing. Residues Trp263 to Ala271 carry the Box 1 motif motif. A required for IRS1 activation and IL4-induced cell growth region spans residues Gly441 to Ser557. The tract at residues Ala460–Ala482 is disordered. The residue at position 500 (Tyr500) is a Phosphotyrosine. Residues Ala510–Pro546 form a disordered region. The tract at residues Ser557–Leu653 is required for IL4-induced gene expression. Phosphotyrosine is present on residues Tyr575, Tyr603, and Tyr631. Residues Ala586–Glu672 are disordered. A compositionally biased stretch (low complexity) spans Gln635 to Pro647. The ITIM motif signature appears at Ile707–Leu712. The interval Pro766–Ser810 is disordered.

The protein belongs to the type I cytokine receptor family. Type 4 subfamily. In terms of assembly, the functional IL4 receptor is formed by initial binding of IL4 to IL4R. Subsequent recruitment to the complex of the common gamma chain, in immune cells, creates a type I receptor and, in non-immune cells, of IL13RA1 forms a type II receptor. IL4R can also interact with the IL13/IL13RA1 complex to form a similar type II receptor. Interacts with the SH2-containing phosphatases, PTPN6/SHIP1, PTPN11/SHIP2 and INPP5D/SHIP. Interacts with JAK3. Interacts with PIK3C3. Interacts with JAK1 through a Box 1-containing region; inhibited by SOCS5. Interacts with SOCS5; inhibits IL4 signaling. Interacts with CLM1. Interacts with IL13RA2. In terms of processing, on IL4 binding, phosphorylated on C-terminal tyrosine residues. Soluble IL4R can also be produced by proteolytic cleavage at the cell surface (shedding). Expressed in both Th1 and Th2 cells.

Its subcellular location is the cell membrane. The protein resides in the secreted. Its function is as follows. Receptor for both interleukin 4 and interleukin 13. Couples to the JAK1/2/3-STAT6 pathway. The IL4 response is involved in promoting Th2 differentiation. The IL4/IL13 responses are involved in regulating IgE production and, chemokine and mucus production at sites of allergic inflammation. In certain cell types, can signal through activation of insulin receptor substrates, IRS1/IRS2. This is Interleukin-4 receptor subunit alpha (Il4r) from Mus musculus (Mouse).